Consider the following 389-residue polypeptide: MDLFEYQARDLFEKHGVPVLAGIVATTPEEAKAAAEKIGGVTVVKAQVKVGGRGKAGGVKVAKTPEEAYEYAQQILGMDIKGHTVHRVMIAQGADIAEEYYFSVLLDRANRSYLAMCSVEGGMEIEQLAVERPDALARVDVSPADGITEAKAREIVEQAKFDAETAEKVIPVLVKLGEVYAKEDATLVEVNPLVKTGDGEILALDGKVSLDDNAAFRHPEHAELADKTTADPLEEKAKENDLNYVKLDGEVGIIGNGAGLVMSTLDVVAYAGEKHGDVKPANFLDIGGGASAEVMAAGLDVILGDPQVKSVFVNVFGGITACDAVANGIVKALEILGDSATKPIVVRLDGNNVDEGRAILREANHPLITTADTMDAGADKAAELAHAAK.

Positions 9–236 constitute an ATP-grasp domain; that stretch reads RDLFEKHGVP…KTTADPLEEK (228 aa). Residues K45, 52-54, A94, and E99 contribute to the ATP site; that span reads GRG. Mg(2+) contacts are provided by N191 and D205. Residues N256 and 318–320 contribute to the substrate site; that span reads GIT.

It belongs to the succinate/malate CoA ligase beta subunit family. Heterotetramer of two alpha and two beta subunits. The cofactor is Mg(2+).

It catalyses the reaction succinate + ATP + CoA = succinyl-CoA + ADP + phosphate. The catalysed reaction is GTP + succinate + CoA = succinyl-CoA + GDP + phosphate. It functions in the pathway carbohydrate metabolism; tricarboxylic acid cycle; succinate from succinyl-CoA (ligase route): step 1/1. In terms of biological role, succinyl-CoA synthetase functions in the citric acid cycle (TCA), coupling the hydrolysis of succinyl-CoA to the synthesis of either ATP or GTP and thus represents the only step of substrate-level phosphorylation in the TCA. The beta subunit provides nucleotide specificity of the enzyme and binds the substrate succinate, while the binding sites for coenzyme A and phosphate are found in the alpha subunit. The protein is Succinate--CoA ligase [ADP-forming] subunit beta of Kocuria rhizophila (strain ATCC 9341 / DSM 348 / NBRC 103217 / DC2201).